The primary structure comprises 515 residues: Maturase K (515 aa).

The protein belongs to the intron maturase 2 family. MatK subfamily.

It is found in the plastid. The protein resides in the chloroplast. Functionally, usually encoded in the trnK tRNA gene intron. Probably assists in splicing its own and other chloroplast group II introns. This is Maturase K from Picea mariana (Black spruce).